A 215-amino-acid polypeptide reads, in one-letter code: MSGTQRRGGGAGGERRGRDNRRGQNDRNRNQNEYLERVVAINRVAKVVQGGRRFSFTALVVVGDGEGSVGVGYGKAKEVPAAIAKAVEEAKKHFFKVPLVGRTITHPVIGEKAAGVVMLRPASPGTGVIAGGSARAVLECAGVHDVLAKSLGSSNAINVVHATVDALQQLEEPEEVARRRGKSVEDIAPAAMLRARKEADEAAAAARMEEKAGVN.

A compositionally biased stretch (gly residues) spans 1–12 (MSGTQRRGGGAG). Residues 1-31 (MSGTQRRGGGAGGERRGRDNRRGQNDRNRNQ) form a disordered region. Residues 13 to 31 (GERRGRDNRRGQNDRNRNQ) show a composition bias toward basic and acidic residues. Residues 34-97 (YLERVVAINR…EEAKKHFFKV (64 aa)) form the S5 DRBM domain.

The protein belongs to the universal ribosomal protein uS5 family. As to quaternary structure, part of the 30S ribosomal subunit. Contacts proteins S4 and S8.

Its function is as follows. With S4 and S12 plays an important role in translational accuracy. Functionally, located at the back of the 30S subunit body where it stabilizes the conformation of the head with respect to the body. The protein is Small ribosomal subunit protein uS5 of Cutibacterium acnes (strain DSM 16379 / KPA171202) (Propionibacterium acnes).